Consider the following 126-residue polypeptide: Aspartate 1-decarboxylase (126 aa).

Ser25 functions as the Schiff-base intermediate with substrate; via pyruvic acid in the catalytic mechanism. Residue Ser25 is modified to Pyruvic acid (Ser). Thr57 is a binding site for substrate. Residue Tyr58 is the Proton donor of the active site. A substrate-binding site is contributed by 73–75 (GGA).

Belongs to the PanD family. Heterooctamer of four alpha and four beta subunits. Pyruvate is required as a cofactor. Is synthesized initially as an inactive proenzyme, which is activated by self-cleavage at a specific serine bond to produce a beta-subunit with a hydroxyl group at its C-terminus and an alpha-subunit with a pyruvoyl group at its N-terminus.

It is found in the cytoplasm. The enzyme catalyses L-aspartate + H(+) = beta-alanine + CO2. Its pathway is cofactor biosynthesis; (R)-pantothenate biosynthesis; beta-alanine from L-aspartate: step 1/1. Its function is as follows. Catalyzes the pyruvoyl-dependent decarboxylation of aspartate to produce beta-alanine. This Xanthomonas campestris pv. campestris (strain B100) protein is Aspartate 1-decarboxylase.